The chain runs to 475 residues: Citrate synthase, mitochondrial (475 aa).

Active-site residues include histidine 310, histidine 356, and aspartate 411.

This sequence belongs to the citrate synthase family.

It is found in the mitochondrion matrix. It carries out the reaction oxaloacetate + acetyl-CoA + H2O = citrate + CoA + H(+). It functions in the pathway carbohydrate metabolism; tricarboxylic acid cycle; isocitrate from oxaloacetate: step 1/2. The protein is Citrate synthase, mitochondrial (cit-1) of Aspergillus niger.